The primary structure comprises 419 residues: MDQFVIQGGTSLAGEVTISGAKNAALPILFAALLADGKSTFTNVPRLRDIVTTEALLKTLGASVNWQGDTLVIDGATVDKTLAPYDLVKQMRASVLTLGPLVARFGEAQVSLPGGCAIGARPVDIHIQGLERMGAQINVENGYINAKVNGRLKGAEIFMEMVSVGATENLLMAATLADGKTVLENAACEPEITDLANCLIAMGAKITGAGTNRIEIEGVERLAGCEHRILPDRIETGTFLVAAAMAGGEVLCKMTDFHSLEPVIEKLRATNALLEVHDNSIYLDMRGRELKAVNIKTAPHPGFPTDMQAQFTALNVVANGSATITETIFENRFMHVPELQRMGANIRLEGNTAICGDTKTLSGAQVMATDLRASASLILTGIVAQGETIVDRIYHVDRGYERIEDKLSALGANIKRRSS.

22-23 (KN) is a binding site for phosphoenolpyruvate. Arg92 contacts UDP-N-acetyl-alpha-D-glucosamine. Residue Cys116 is the Proton donor of the active site. The residue at position 116 (Cys116) is a 2-(S-cysteinyl)pyruvic acid O-phosphothioketal. Residues Asp306 and Ile328 each coordinate UDP-N-acetyl-alpha-D-glucosamine.

It belongs to the EPSP synthase family. MurA subfamily.

It localises to the cytoplasm. It carries out the reaction phosphoenolpyruvate + UDP-N-acetyl-alpha-D-glucosamine = UDP-N-acetyl-3-O-(1-carboxyvinyl)-alpha-D-glucosamine + phosphate. The protein operates within cell wall biogenesis; peptidoglycan biosynthesis. Cell wall formation. Adds enolpyruvyl to UDP-N-acetylglucosamine. The chain is UDP-N-acetylglucosamine 1-carboxyvinyltransferase from Pseudoalteromonas translucida (strain TAC 125).